The sequence spans 41 residues: Minor histocompatibility protein HB-1 (41 aa).

Positions 9–17 (EEKRGSLHV) are loss of recognition by cytotoxic T lymphocyte (CTL).

HB-1 forms a complex with MHC class I HLA-B44. Expressed in acute lymphoblastic leukemia B-cells and Epstein-Barr virus-transformed B-cells.

Functionally, precursor of the histocomplatibility antigen HB-1. More generally, minor histocomplatibility antigens (mHags) refer to immunogenic peptide which, when complexed with MHC, can generate an immune response after recognition by specific T-cells. The peptides are derived from polymorphic intracellular proteins, which are cleaved by normal pathways of antigen processing. The binding of these peptides to MHC class I or class II molecules and its expression on the cell surface can stimulate T-cell responses and thereby trigger graft rejection or graft-versus-host disease (GVHD) after hematopoietic stem cell transplantation from HLA-identical sibling donor. GVHD is a frequent complication after bone marrow transplantation (BMT), due to mismatch of minor histocomplatibility antigen in HLA-matched sibling marrow transplants. HB-1 is presented on the cell surface by MHC class I HLA-B44. This complex specifically elicits donor-cytotoxic T lymphocyte (CTL) reactivity in B-cell acute lymphoblastic leukemia (B-ALL) after treatment by HLA-identical allogenic bone marrow transplantation (BMT). It induces cell recognition and lysis by CTL. However, HB-1 restricted expression in B-ALL cells and not in normal tissues may allow a specific CTL reactivity against B-ALL without the risk of evoking graft-versus-host disease. This chain is Minor histocompatibility protein HB-1 (HMHB1), found in Homo sapiens (Human).